An 840-amino-acid chain; its full sequence is MNQEVKNKIFSILKITFATALFIFVVITLYRELSGINFKDTLVEFSKINRMSLVLLFIGGGASLVILSMYDVILSRALKMDISLGKVLRVSYIINALNAIVGFGGFIGAGVRAMVYKNYTHDKKKLVHFISLILISMLTGLSLLSLLIVFHVFDASLILDKITWVRWVLYVVSFFLPLFIIYSMVRPPDKNNRFVGLYCTLVSCVEWLAAAVVLYFCGVIVDAHVSFMSFIAIFIIAALSGLVSFIPGGFGAFDLVVLLGFKTLGVPEEKVLLMLLLYRFAYYFVPVIIALILSSFEFGTSAKKYIEGSKYFIPAKDVTSFLMSYQKDIIAKIPSLSLAILVFFTSMIFFVNNLTIVYDALYDGNHLTYYILLAIHTSACLLLLLNVVGIYKQSRRAIIFAMISILLITVATFFTYASYILITWLAIIFVLLIVAFRRARRLKRPVRMRNIVAMLLFSLFILYVNHIFIAGTLYALDIYTIEMHTSVLRYYFWLTILIIAIIIGMIAWLFDYQFSKVRISSKIEDCEEIINQYGGNYLSHLIYSGDKQFFTNENKTAFLMYRYKASSLVVLGDPLGDENAFDELLEAFYNYAEYLGYDVIFYQVTDQHMPLYHNFGNQFFKLGEEAIIDLTQFSTSGKKRRGFRATLNKFDELNISFEIIEPPFSTEFINELQHVSDLWLDNRQEMHFSVGQFNEEYLSKAPIGVMRNEENEVIAFCSLMPTYFNDAISVDLIRWLPELDLPLMDGLYLHMLLWSKEQGYTKFNMGMATLSNVGQLHYSYLRERLAGRVFEHFNGLYRFQGLRRYKSKYNPNWEPRFLVYRKDNSLWESLSKVMRVIRHK.

Residues 1 to 8 are Cytoplasmic-facing; sequence MNQEVKNK. Residues 9–29 form a helical membrane-spanning segment; that stretch reads IFSILKITFATALFIFVVITL. Topologically, residues 30-52 are extracellular; the sequence is YRELSGINFKDTLVEFSKINRMS. The helical transmembrane segment at 53-73 threads the bilayer; it reads LVLLFIGGGASLVILSMYDVI. Residues 74 to 89 lie on the Cytoplasmic side of the membrane; the sequence is LSRALKMDISLGKVLR. The helical transmembrane segment at 90 to 110 threads the bilayer; that stretch reads VSYIINALNAIVGFGGFIGAG. Over 111–128 the chain is Extracellular; that stretch reads VRAMVYKNYTHDKKKLVH. The chain crosses the membrane as a helical span at residues 129 to 149; that stretch reads FISLILISMLTGLSLLSLLIV. Residues 150 to 161 are Cytoplasmic-facing; sequence FHVFDASLILDK. A helical membrane pass occupies residues 162–182; the sequence is ITWVRWVLYVVSFFLPLFIIY. Residues 183–200 are Extracellular-facing; the sequence is SMVRPPDKNNRFVGLYCT. A helical transmembrane segment spans residues 201–221; sequence LVSCVEWLAAAVVLYFCGVIV. Over 222–229 the chain is Cytoplasmic; sequence DAHVSFMS. A helical membrane pass occupies residues 230 to 250; that stretch reads FIAIFIIAALSGLVSFIPGGF. Residues 251-271 lie on the Extracellular side of the membrane; that stretch reads GAFDLVVLLGFKTLGVPEEKV. The helical transmembrane segment at 272 to 292 threads the bilayer; it reads LLMLLLYRFAYYFVPVIIALI. Topologically, residues 293 to 337 are cytoplasmic; that stretch reads LSSFEFGTSAKKYIEGSKYFIPAKDVTSFLMSYQKDIIAKIPSLS. Residues 338-358 traverse the membrane as a helical segment; that stretch reads LAILVFFTSMIFFVNNLTIVY. Over 359–369 the chain is Extracellular; sequence DALYDGNHLTY. The helical transmembrane segment at 370–390 threads the bilayer; the sequence is YILLAIHTSACLLLLLNVVGI. The Cytoplasmic segment spans residues 391-394; sequence YKQS. The next 2 membrane-spanning stretches (helical) occupy residues 395-415 and 416-436; these read RRAI…TFFT and YASY…IVAF. Over 437–450 the chain is Cytoplasmic; sequence RRARRLKRPVRMRN. Residues 451 to 471 traverse the membrane as a helical segment; it reads IVAMLLFSLFILYVNHIFIAG. Residues 472–489 lie on the Extracellular side of the membrane; it reads TLYALDIYTIEMHTSVLR. The chain crosses the membrane as a helical span at residues 490-510; that stretch reads YYFWLTILIIAIIIGMIAWLF. Over 511 to 840 the chain is Cytoplasmic; that stretch reads DYQFSKVRIS…SKVMRVIRHK (330 aa).

Belongs to the LPG synthase family.

Its subcellular location is the cell membrane. It catalyses the reaction L-lysyl-tRNA(Lys) + a 1,2-diacyl-sn-glycero-3-phospho-(1'-sn-glycerol) = a 1,2-diacyl-sn-glycero-3-phospho-1'-(3'-O-L-lysyl)-sn-glycerol + tRNA(Lys). Catalyzes the transfer of a lysyl group from L-lysyl-tRNA(Lys) to membrane-bound phosphatidylglycerol (PG), which produces lysylphosphatidylglycerol (LPG), a major component of the bacterial membrane with a positive net charge. LPG synthesis contributes to bacterial virulence as it is involved in the resistance mechanism against cationic antimicrobial peptides (CAMP) produces by the host's immune system (defensins, cathelicidins) and by the competing microorganisms (bacteriocins). In fact, the modification of anionic phosphatidylglycerol with positively charged L-lysine results in repulsion of the peptides. The polypeptide is Phosphatidylglycerol lysyltransferase (mprF) (Staphylococcus aureus (strain MSSA476)).